The following is a 130-amino-acid chain: Small ribosomal subunit protein uS8B (130 aa).

This sequence belongs to the universal ribosomal protein uS8 family. As to quaternary structure, component of the small ribosomal subunit (SSU). Mature yeast ribosomes consist of a small (40S) and a large (60S) subunit. The 40S small subunit contains 1 molecule of ribosomal RNA (18S rRNA) and 33 different proteins (encoded by 57 genes). The large 60S subunit contains 3 rRNA molecules (25S, 5.8S and 5S rRNA) and 46 different proteins (encoded by 81 genes).

The protein localises to the cytoplasm. Component of the ribosome, a large ribonucleoprotein complex responsible for the synthesis of proteins in the cell. The small ribosomal subunit (SSU) binds messenger RNAs (mRNAs) and translates the encoded message by selecting cognate aminoacyl-transfer RNA (tRNA) molecules. The large subunit (LSU) contains the ribosomal catalytic site termed the peptidyl transferase center (PTC), which catalyzes the formation of peptide bonds, thereby polymerizing the amino acids delivered by tRNAs into a polypeptide chain. The nascent polypeptides leave the ribosome through a tunnel in the LSU and interact with protein factors that function in enzymatic processing, targeting, and the membrane insertion of nascent chains at the exit of the ribosomal tunnel. The protein is Small ribosomal subunit protein uS8B of Saccharomyces cerevisiae (strain ATCC 204508 / S288c) (Baker's yeast).